Consider the following 194-residue polypeptide: Imidazoleglycerol-phosphate dehydratase (194 aa).

Belongs to the imidazoleglycerol-phosphate dehydratase family.

Its subcellular location is the cytoplasm. The enzyme catalyses D-erythro-1-(imidazol-4-yl)glycerol 3-phosphate = 3-(imidazol-4-yl)-2-oxopropyl phosphate + H2O. It functions in the pathway amino-acid biosynthesis; L-histidine biosynthesis; L-histidine from 5-phospho-alpha-D-ribose 1-diphosphate: step 6/9. The sequence is that of Imidazoleglycerol-phosphate dehydratase from Streptococcus sanguinis (strain SK36).